Consider the following 151-residue polypeptide: Transcriptional repressor NrdR (151 aa).

The segment at 3–34 (CPYCAYGESKVVDSRSTEDGSSIRRRRECLKC) is a zinc-finger region. The ATP-cone domain occupies 49–139 (ILVIKKNMSR…VYRQFKDINT (91 aa)).

The protein belongs to the NrdR family. It depends on Zn(2+) as a cofactor.

Its function is as follows. Negatively regulates transcription of bacterial ribonucleotide reductase nrd genes and operons by binding to NrdR-boxes. The polypeptide is Transcriptional repressor NrdR (Clostridium botulinum (strain 657 / Type Ba4)).